The primary structure comprises 207 residues: Thymidylate kinase (207 aa).

7–14 serves as a coordination point for ATP; it reads GCEGSGKS.

The protein belongs to the thymidylate kinase family.

The enzyme catalyses dTMP + ATP = dTDP + ADP. In terms of biological role, phosphorylation of dTMP to form dTDP in both de novo and salvage pathways of dTTP synthesis. The sequence is that of Thymidylate kinase from Chlamydia caviae (strain ATCC VR-813 / DSM 19441 / 03DC25 / GPIC) (Chlamydophila caviae).